A 763-amino-acid chain; its full sequence is Elongation factor G, mitochondrial (763 aa).

A mitochondrion-targeting transit peptide spans 1–52 (MFMRLKVLEMNSIRRQTLLRQFTNVYNVVSRSARLCSQAIPKRLFYSTGSRA). One can recognise a tr-type G domain in the interval 60–347 (SRLRNIGISA…AVCDYLPNPS (288 aa)). Residues 69 to 76 (AHIDSGKT), 145 to 149 (DTPGH), and 199 to 202 (NKMD) each bind GTP.

This sequence belongs to the TRAFAC class translation factor GTPase superfamily. Classic translation factor GTPase family. EF-G/EF-2 subfamily.

The protein resides in the mitochondrion. Its pathway is protein biosynthesis; polypeptide chain elongation. Mitochondrial GTPase that catalyzes the GTP-dependent ribosomal translocation step during translation elongation. During this step, the ribosome changes from the pre-translocational (PRE) to the post-translocational (POST) state as the newly formed A-site-bound peptidyl-tRNA and P-site-bound deacylated tRNA move to the P and E sites, respectively. Catalyzes the coordinated movement of the two tRNA molecules, the mRNA and conformational changes in the ribosome. This is Elongation factor G, mitochondrial (mef1) from Schizosaccharomyces japonicus (strain yFS275 / FY16936) (Fission yeast).